Here is a 152-residue protein sequence, read N- to C-terminus: Eukaryotic translation initiation factor 2 subunit 3 (152 aa).

At alanine 1 the chain carries N-acetylalanine. Asparagine 51–aspartate 54 contacts GTP.

It belongs to the TRAFAC class translation factor GTPase superfamily. Classic translation factor GTPase family. EIF2G subfamily. As to quaternary structure, eukaryotic translation initiation factor 2 eIF2 is a heterotrimeric complex composed of an alpha (EIF2S1), a beta (EIF2S2) and a gamma (EIF2S3) chain. eIF2 is member of the 43S pre-initiation complex (43S PIC). Interacts (via C-terminus) with CDC123; the interaction is direct.

It is found in the cytoplasm. Its subcellular location is the cytosol. Member of the eIF2 complex that functions in the early steps of protein synthesis by forming a ternary complex with GTP and initiator tRNA. This complex binds to a 40S ribosomal subunit, followed by mRNA binding to form the 43S pre-initiation complex (43S PIC). Junction of the 60S ribosomal subunit to form the 80S initiation complex is preceded by hydrolysis of the GTP bound to eIF2 and release of an eIF2-GDP binary complex. In order for eIF2 to recycle and catalyze another round of initiation, the GDP bound to eIF2 must exchange with GTP by way of a reaction catalyzed by eIF-2B. In Oryctolagus cuniculus (Rabbit), this protein is Eukaryotic translation initiation factor 2 subunit 3 (EIF2S3).